Here is a 428-residue protein sequence, read N- to C-terminus: Cytochrome P450-terp (428 aa).

Cys377 contributes to the heme binding site.

This sequence belongs to the cytochrome P450 family. Heme is required as a cofactor.

It localises to the cytoplasm. Its function is as follows. Catalyzes the hydroxylation of alpha-terpineol. The chain is Cytochrome P450-terp (cyp108) from Pseudomonas sp.